The primary structure comprises 423 residues: FAD-dependent monooxygenase asL6 (423 aa).

FAD-binding positions include 10–13 (AGVA), 34–35 (ER), Arg-108, Tyr-290, and Asp-312. Residues 371–391 (GMGMFQSKFGVGVFYVLLAII) traverse the membrane as a helical segment.

Belongs to the aromatic-ring hydroxylase family. Requires FAD as cofactor.

The protein resides in the membrane. It participates in secondary metabolite biosynthesis; terpenoid biosynthesis. FAD-dependent monooxygenase; part of the gene cluster that mediates the biosynthesis of xenovulene A, an unusual meroterpenoid that has potent inhibitory effects on the human gamma-aminobutyrate A (GABAA) benzodiazepine receptor. The first step of xenovulene A biosynthesis is the biosynthesis of 3-methylorcinaldehyde performed by the non-reducing polyketide synthase aspks1. The salicylate hydroxylase asL1 then catalyzes the oxidative dearomatization of 3-methylorcinaldehyde to yield a dearomatized hydroxycyclohexadione. The 2-oxoglutarate-dependent dioxygenase asL3 further catalyzes the oxidative ring expansion to provide the first tropolone metabolite. The cytochrome P450 monooxygenase asR2 allows the synthesis of tropolone hemiacetal. In parallel, a previously unrecognised class of terpene cyclase, asR6, produces alpha-humulene from farnesylpyrophosphate (FPP). The putative Diels-Alderase asR5 probably catalyzes the formation of the tropolone-humulene skeleton by linking humulene and the polyketide moiety. Oxidative-ring contractions catalyzed by asL4 and asL6 then processively remove carbon atoms from the polyketide to yield xenovulene A. The polypeptide is FAD-dependent monooxygenase asL6 (Sarocladium schorii (Acremonium strictum (strain IMI 501407))).